A 101-amino-acid polypeptide reads, in one-letter code: Small ribosomal subunit protein uS14 (101 aa).

The protein belongs to the universal ribosomal protein uS14 family. In terms of assembly, part of the 30S ribosomal subunit. Contacts proteins S3 and S10.

Its function is as follows. Binds 16S rRNA, required for the assembly of 30S particles and may also be responsible for determining the conformation of the 16S rRNA at the A site. This Chlamydia caviae (strain ATCC VR-813 / DSM 19441 / 03DC25 / GPIC) (Chlamydophila caviae) protein is Small ribosomal subunit protein uS14.